Consider the following 365-residue polypeptide: Endophilin-B1 (365 aa).

N-acetylmethionine is present on methionine 1. Positions 1 to 30 (MNIMDFNVKKLAADAGTFLSRAVQFTEEKL) are membrane-binding amphipathic helix. Residues 1 to 37 (MNIMDFNVKKLAADAGTFLSRAVQFTEEKLGQAEKTE) form a required for membrane binding region. The region spanning 27–261 (EEKLGQAEKT…LGSFPSNYVS (235 aa)) is the BAR domain. Position 145 is a phosphothreonine; by CDK5 (threonine 145). Positions 156–185 (KTIAKERKLLQNKRLDLDAAKTRLKKAKAA) form a coiled coil. The SH3 domain maps to 305–365 (SSTRKARVLY…VPITYLELLN (61 aa)).

This sequence belongs to the endophilin family. Homodimer, and heterodimer with SH3GLB2. Binds BAX; induction of apoptosis augments BAX binding. Binds DNM1, HTT, AMPH, BIN1 and ARFGAP1. Interacts with UVRAG; UVRAG bridges the interaction to BECN1 indicative for an association with the PI3K complex II (PI3KC3-C2). Phosphorylated at Thr-145 by CDK5; this phosphorylation is required for autophagy induction in starved neurons and facilitates homodimerization. Expressed in brain, heart, lung and spleen. Low level in liver and testis.

The protein localises to the cytoplasm. The protein resides in the golgi apparatus membrane. It localises to the mitochondrion outer membrane. It is found in the cytoplasmic vesicle. Its subcellular location is the autophagosome membrane. The protein localises to the midbody. Functionally, may be required for normal outer mitochondrial membrane dynamics. Required for coatomer-mediated retrograde transport in certain cells. May recruit other proteins to membranes with high curvature. May promote membrane fusion. Involved in activation of caspase-dependent apoptosis by promoting BAX/BAK1 activation. Involved in caspase-independent apoptosis during nutrition starvation and involved in the regulation of autophagy. Activates lipid kinase activity of PIK3C3 during autophagy probably by associating with the PI3K complex II (PI3KC3-C2). Associated with PI3KC3-C2 during autophagy may regulate the trafficking of ATG9A from the Golgi complex to the peripheral cytoplasm for the formation of autophagosomes by inducing Golgi membrane tubulation and fragmentation. Involved in regulation of degradative endocytic trafficking and cytokinesis, probably in the context of PI3KC3-C2. In Rattus norvegicus (Rat), this protein is Endophilin-B1.